The primary structure comprises 350 residues: Putative [LysW]-lysine/[LysW]-ornithine hydrolase (350 aa).

A Zn(2+)-binding site is contributed by histidine 72. Residue aspartate 74 is part of the active site. Aspartate 96 contacts Zn(2+). Glutamate 128 serves as the catalytic Proton acceptor. Zn(2+) contacts are provided by glutamate 129, glutamate 152, and histidine 321.

The protein belongs to the peptidase M20A family. LysK subfamily. It depends on Zn(2+) as a cofactor. Co(2+) is required as a cofactor.

The protein localises to the cytoplasm. It carries out the reaction [amino-group carrier protein]-C-terminal-gamma-(L-lysyl)-L-glutamate + H2O = [amino-group carrier protein]-C-terminal-L-glutamate + L-lysine. The catalysed reaction is [amino-group carrier protein]-C-terminal-gamma-(L-ornithyl)-L-glutamate + H2O = [amino-group carrier protein]-C-terminal-L-glutamate + L-ornithine. It participates in amino-acid biosynthesis; L-lysine biosynthesis via AAA pathway; L-lysine from L-alpha-aminoadipate (Thermus route): step 5/5. It functions in the pathway amino-acid biosynthesis; L-arginine biosynthesis. Catalyzes the release of L-lysine from [LysW]-gamma-L-lysine and the release of L-ornithine from [LysW]-L-ornithine. The protein is Putative [LysW]-lysine/[LysW]-ornithine hydrolase of Aeropyrum pernix (strain ATCC 700893 / DSM 11879 / JCM 9820 / NBRC 100138 / K1).